Consider the following 450-residue polypeptide: DNA primase DnaG (450 aa).

A Toprim domain is found at 199–273 (DSIIVVEGRA…DVDYVARAPE (75 aa)). 3 residues coordinate Mg(2+): glutamate 205, aspartate 247, and aspartate 249. Residues 320-348 (APSKEVKPAPKHEPKPQPVEQKPREEKII) show a composition bias toward basic and acidic residues. Residues 320–350 (APSKEVKPAPKHEPKPQPVEQKPREEKIIRP) are disordered.

It belongs to the archaeal DnaG primase family. As to quaternary structure, forms a ternary complex with MCM helicase and DNA. Component of the archaeal exosome complex. Requires Mg(2+) as cofactor.

The enzyme catalyses ssDNA + n NTP = ssDNA/pppN(pN)n-1 hybrid + (n-1) diphosphate.. Functionally, RNA polymerase that catalyzes the synthesis of short RNA molecules used as primers for DNA polymerase during DNA replication. Also part of the exosome, which is a complex involved in RNA degradation. Acts as a poly(A)-binding protein that enhances the interaction between heteromeric, adenine-rich transcripts and the exosome. The polypeptide is DNA primase DnaG (Thermococcus gammatolerans (strain DSM 15229 / JCM 11827 / EJ3)).